A 216-amino-acid polypeptide reads, in one-letter code: Lipoprotein-releasing system ATP-binding protein LolD (216 aa).

The ABC transporter domain maps to 2–216 (IHLEGITKSF…TIHMVDGNII (215 aa)). 34–41 (GPSGAGKT) contributes to the ATP binding site.

The protein belongs to the ABC transporter superfamily. Lipoprotein translocase (TC 3.A.1.125) family. In terms of assembly, the complex is composed of two ATP-binding proteins (LolD) and two transmembrane proteins (LolC and LolE).

It localises to the cell inner membrane. Part of the ABC transporter complex LolCDE involved in the translocation of mature outer membrane-directed lipoproteins, from the inner membrane to the periplasmic chaperone, LolA. Responsible for the formation of the LolA-lipoprotein complex in an ATP-dependent manner. The sequence is that of Lipoprotein-releasing system ATP-binding protein LolD from Bacteroides fragilis (strain YCH46).